A 154-amino-acid polypeptide reads, in one-letter code: Large ribosomal subunit protein uL22c (154 aa).

This sequence belongs to the universal ribosomal protein uL22 family. As to quaternary structure, part of the 50S ribosomal subunit.

It localises to the plastid. The protein resides in the chloroplast. This protein binds specifically to 23S rRNA. Functionally, the globular domain of the protein is located near the polypeptide exit tunnel on the outside of the subunit, while an extended beta-hairpin is found that lines the wall of the exit tunnel in the center of the 70S ribosome. This is Large ribosomal subunit protein uL22c (rpl22) from Helianthus annuus (Common sunflower).